The chain runs to 337 residues: Aspartate-semialdehyde dehydrogenase 2 (337 aa).

NADP(+) contacts are provided by residues 13–16 and 41–42; these read TGAV and RS. Arginine 101 lines the phosphate pocket. Residue cysteine 132 is the Acyl-thioester intermediate of the active site. Glutamine 159 is a substrate binding site. An NADP(+)-binding site is contributed by 162–163; it reads SG. Residue lysine 216 coordinates phosphate. Residue arginine 238 participates in substrate binding. Catalysis depends on histidine 245, which acts as the Proton acceptor. Residue asparagine 316 participates in NADP(+) binding.

Belongs to the aspartate-semialdehyde dehydrogenase family. In terms of assembly, homodimer.

It carries out the reaction L-aspartate 4-semialdehyde + phosphate + NADP(+) = 4-phospho-L-aspartate + NADPH + H(+). It participates in amino-acid biosynthesis; L-lysine biosynthesis via DAP pathway; (S)-tetrahydrodipicolinate from L-aspartate: step 2/4. The protein operates within amino-acid biosynthesis; L-methionine biosynthesis via de novo pathway; L-homoserine from L-aspartate: step 2/3. It functions in the pathway amino-acid biosynthesis; L-threonine biosynthesis; L-threonine from L-aspartate: step 2/5. Functionally, catalyzes the NADPH-dependent formation of L-aspartate-semialdehyde (L-ASA) by the reductive dephosphorylation of L-aspartyl-4-phosphate. This chain is Aspartate-semialdehyde dehydrogenase 2 (asd2), found in Vibrio cholerae serotype O1 (strain ATCC 39315 / El Tor Inaba N16961).